We begin with the raw amino-acid sequence, 79 residues long: Defensin-like protein 272 (79 aa).

The signal sequence occupies residues 1-24 (MSSKIKFVALLIVVISLLLNNAQS). 4 disulfides stabilise this stretch: C34–C77, C43–C63, C49–C75, and C53–C76.

It belongs to the DEFL family.

Its subcellular location is the secreted. This is Defensin-like protein 272 from Arabidopsis thaliana (Mouse-ear cress).